We begin with the raw amino-acid sequence, 271 residues long: Phosphatidylinositol transfer protein alpha isoform (271 aa).

Residues Thr-59, Lys-61, Glu-86, Asn-90, Thr-97, and Lys-195 each contribute to the a 1,2-diacyl-sn-glycero-3-phospho-(1D-myo-inositol) site. Position 216 is an N6-acetyllysine (Lys-216). Residues 251-264 are compositionally biased toward basic and acidic residues; the sequence is TKRQLDEMRQKDPV. The disordered stretch occupies residues 251-271; sequence TKRQLDEMRQKDPVKGMTADD.

This sequence belongs to the PtdIns transfer protein family. PI transfer class I subfamily. Phosphorylated by PKC in a calcium and phosphatidylserine-dependent manner.

The protein localises to the cytoplasm. Its subcellular location is the nucleus. The enzyme catalyses a 1,2-diacyl-sn-glycero-3-phosphocholine(in) = a 1,2-diacyl-sn-glycero-3-phosphocholine(out). The catalysed reaction is a 1,2-diacyl-sn-glycero-3-phospho-(1D-myo-inositol)(in) = a 1,2-diacyl-sn-glycero-3-phospho-(1D-myo-inositol)(out). In terms of biological role, catalyzes the transfer of phosphatidylinositol (PI) and phosphatidylcholine (PC) between membranes. Shows a preference for PI and PC containing shorter saturated or monosaturated acyl chains at the sn-1 and sn-2 positions. Preference order for PC is C16:1 &gt; C16:0 &gt; C18:1 &gt; C18:0 &gt; C20:4 and for PI is C16:1 &gt; C16:0 &gt; C18:1 &gt; C18:0 &gt; C20:4 &gt; C20:3. The polypeptide is Phosphatidylinositol transfer protein alpha isoform (Pitpna) (Mus musculus (Mouse)).